The following is an 878-amino-acid chain: Valine--tRNA ligase (878 aa).

The 'HIGH' region signature appears at proline 43–histidine 53. The short motif at lysine 527–serine 531 is the 'KMSKS' region element. An ATP-binding site is contributed by lysine 530.

It belongs to the class-I aminoacyl-tRNA synthetase family. ValS type 2 subfamily.

It is found in the cytoplasm. It carries out the reaction tRNA(Val) + L-valine + ATP = L-valyl-tRNA(Val) + AMP + diphosphate. In terms of biological role, catalyzes the attachment of valine to tRNA(Val). As ValRS can inadvertently accommodate and process structurally similar amino acids such as threonine, to avoid such errors, it has a 'posttransfer' editing activity that hydrolyzes mischarged Thr-tRNA(Val) in a tRNA-dependent manner. The sequence is that of Valine--tRNA ligase from Methanocaldococcus jannaschii (strain ATCC 43067 / DSM 2661 / JAL-1 / JCM 10045 / NBRC 100440) (Methanococcus jannaschii).